A 143-amino-acid chain; its full sequence is Transcription antitermination protein NusB (143 aa).

The protein belongs to the NusB family.

Its function is as follows. Involved in transcription antitermination. Required for transcription of ribosomal RNA (rRNA) genes. Binds specifically to the boxA antiterminator sequence of the ribosomal RNA (rrn) operons. This is Transcription antitermination protein NusB from Mannheimia succiniciproducens (strain KCTC 0769BP / MBEL55E).